The primary structure comprises 912 residues: Tiger protein E1 (912 aa).

A signal peptide spans 1-22 (MKLKHLTIFLFIFIYRFLFVKS). At 23-815 (DCYLINNERP…YSENKSSGFP (793 aa)) the chain is on the extracellular side. Residues N54, N108, N164, N183, N232, N268, N323, N356, N398, N407, N568, N637, N653, N658, N706, N716, N763, N774, N781, and N809 are each glycosylated (N-linked (GlcNAc...) asparagine). IPT/TIG domains lie at 532-609 (SSDQ…GPFT) and 612-686 (PVIE…PLII). One can recognise an IPT/TIG 3 domain in the interval 715–796 (TNTSDIDQTA…DGQYFIAQIF (82 aa)). Residues 816-836 (NEMYIGIVAIIIFLALIFFAI) form a helical membrane-spanning segment. Topologically, residues 837 to 912 (KTQVEKYIEE…IRCCFKEHTD (76 aa)) are cytoplasmic.

Its subcellular location is the cell membrane. The chain is Tiger protein E1 (tgrE1) from Dictyostelium discoideum (Social amoeba).